A 170-amino-acid polypeptide reads, in one-letter code: Protein SprT (170 aa).

The SprT-like domain maps to 22-165 (LQLANQHLGT…RQCGEKLQFI (144 aa)). Histidine 78 contacts Zn(2+). Glutamate 79 is a catalytic residue. A Zn(2+)-binding site is contributed by histidine 82.

This sequence belongs to the SprT family. Zn(2+) is required as a cofactor.

Its subcellular location is the cytoplasm. In Yersinia pseudotuberculosis serotype O:1b (strain IP 31758), this protein is Protein SprT.